Consider the following 332-residue polypeptide: Adenosine deaminase (332 aa).

Residues histidine 12 and histidine 14 each coordinate Zn(2+). Substrate is bound by residues histidine 14, aspartate 16, and glycine 170. Residue histidine 197 participates in Zn(2+) binding. Catalysis depends on glutamate 200, which acts as the Proton donor. Aspartate 278 is a binding site for Zn(2+). Aspartate 279 serves as a coordination point for substrate.

Belongs to the metallo-dependent hydrolases superfamily. Adenosine and AMP deaminases family. Adenosine deaminase subfamily. Zn(2+) serves as cofactor.

The catalysed reaction is adenosine + H2O + H(+) = inosine + NH4(+). It catalyses the reaction 2'-deoxyadenosine + H2O + H(+) = 2'-deoxyinosine + NH4(+). Catalyzes the hydrolytic deamination of adenosine and 2-deoxyadenosine. The protein is Adenosine deaminase of Erwinia tasmaniensis (strain DSM 17950 / CFBP 7177 / CIP 109463 / NCPPB 4357 / Et1/99).